The following is a 178-amino-acid chain: Cell division protein ZapC (178 aa).

This sequence belongs to the ZapC family. In terms of assembly, interacts directly with FtsZ.

The protein resides in the cytoplasm. Contributes to the efficiency of the cell division process by stabilizing the polymeric form of the cell division protein FtsZ. Acts by promoting interactions between FtsZ protofilaments and suppressing the GTPase activity of FtsZ. This Aeromonas hydrophila subsp. hydrophila (strain ATCC 7966 / DSM 30187 / BCRC 13018 / CCUG 14551 / JCM 1027 / KCTC 2358 / NCIMB 9240 / NCTC 8049) protein is Cell division protein ZapC.